The primary structure comprises 110 residues: Integration host factor subunit alpha (110 aa).

It belongs to the bacterial histone-like protein family. Heterodimer of an alpha and a beta chain.

This protein is one of the two subunits of integration host factor, a specific DNA-binding protein that functions in genetic recombination as well as in transcriptional and translational control. The sequence is that of Integration host factor subunit alpha from Bdellovibrio bacteriovorus (strain ATCC 15356 / DSM 50701 / NCIMB 9529 / HD100).